We begin with the raw amino-acid sequence, 197 residues long: Ras-related protein RabG2 (197 aa).

Residues 13 to 20 (GDSAVGKT), 61 to 65 (DTAGQ), and 119 to 122 (NKCD) contribute to the GTP site. The disordered stretch occupies residues 175–197 (SKPSVVNPGSGGTSNTGGKKKFC). A lipid anchor (S-geranylgeranyl cysteine) is attached at cysteine 197.

Belongs to the small GTPase superfamily. Rab family.

Its subcellular location is the cell membrane. This Dictyostelium discoideum (Social amoeba) protein is Ras-related protein RabG2 (rabG2).